We begin with the raw amino-acid sequence, 519 residues long: Putative cytochrome P450 CYP13A10 (519 aa).

The helical transmembrane segment at 3–23 (VILLAIPTLFIGFISYYLWIW) threads the bilayer. Cys465 contacts heme.

Belongs to the cytochrome P450 family. The cofactor is heme.

The protein resides in the membrane. In terms of biological role, cytochromes P450 are a group of heme-thiolate monooxygenases. They oxidize a variety of structurally unrelated compounds, including steroids, fatty acids, and xenobiotics. The polypeptide is Putative cytochrome P450 CYP13A10 (cyp-13A10) (Caenorhabditis elegans).